The chain runs to 705 residues: Dolichyl-diphosphooligosaccharide--protein glycosyltransferase subunit STT3A (705 aa).

Over 1-17 (MTKFGFLRLSYEKQDTL) the chain is Cytoplasmic. The chain crosses the membrane as a helical span at residues 18 to 38 (LKLLILSMAAVLSFSTRLFAV). The Lumenal portion of the chain corresponds to 39–119 (LRFESVIHEF…IDIRNVCVFL (81 aa)). The DXD motif 1 motif lies at 47–49 (EFD). A Mn(2+)-binding site is contributed by Asp-49. Residues 120 to 138 (APLFSSFTTIVTYHLTKEL) form a helical membrane-spanning segment. The Cytoplasmic segment spans residues 139–140 (KD). A helical membrane pass occupies residues 141 to 158 (AGAGLLAAAMIAVVPGYI). Over 159 to 169 (SRSVAGSYDNE) the chain is Lumenal. Mn(2+) contacts are provided by Asp-167 and Glu-169. The short motif at 167–169 (DNE) is the DXD motif 2 element. A helical membrane pass occupies residues 170–189 (GIAIFCMLLTYYMWIKAVKT). The Cytoplasmic segment spans residues 190-191 (GS). Residues 192-206 (ICWAAKCALAYFYMV) form a helical membrane-spanning segment. The Lumenal portion of the chain corresponds to 207 to 211 (SSWGG). The helical transmembrane segment at 212 to 228 (YVFLINLIPLHVLVLML) threads the bilayer. Residues 229 to 233 (TGRFS) are Cytoplasmic-facing. A helical membrane pass occupies residues 234–259 (HRIYVAYCTVYCLGTILSMQISFVGF). The Lumenal segment spans residues 260 to 267 (QPVLSSEH). The chain crosses the membrane as a helical span at residues 268–287 (MAAFGVFGLCQIHAFVDYLR). Topologically, residues 288–300 (SKLNPQQFEVLFR) are cytoplasmic. A helical membrane pass occupies residues 301–321 (SVISLVGFVLLTVGALLMLTG). Topologically, residues 322–356 (KISPWTGRFYSLLDPSYAKNNIPIIASVSEHQPTT) are lumenal. Positions 348-351 (SVSE) match the SVSE motif motif. The chain crosses the membrane as a helical span at residues 357 to 379 (WSSYYFDLQLLVFMFPVGLYYCF). Over 380-385 (SNLSDA) the chain is Cytoplasmic. The helical transmembrane segment at 386–402 (RIFIIMYGVTSMYFSAV) threads the bilayer. At 403 to 406 (MVRL) the chain is on the lumenal side. Position 405 (Arg-405) interacts with dolichyl diphosphooligosaccharide. Residues 407–428 (MLVLAPVMCILSGIGVSQVLST) traverse the membrane as a helical segment. Residues 429–453 (YMKNLDISRPDKKSKKQQDSTYPIK) are Cytoplasmic-facing. A helical transmembrane segment spans residues 454-473 (NEVASGMILVMAFFLITYTF). Residues 474–705 (HSTWVTSEAY…DLDNRGLSRT (232 aa)) lie on the Lumenal side of the membrane. The interval 525–527 (WWD) is interacts with target acceptor peptide in protein substrate. A WWDYG motif motif is present at residues 525 to 529 (WWDYG). Tyr-530 is a binding site for dolichyl diphosphooligosaccharide. N-linked (GlcNAc...) asparagine glycosylation is found at Asn-537 and Asn-544. The N-linked (GlcNAc...) (high mannose) asparagine glycan is linked to Asn-548. A DK motif motif is present at residues 592-599 (DINKFLWM).

The protein belongs to the STT3 family. Component of the oligosaccharyltransferase (OST) complex. There are 2 OST complexes, OST-A and OST-B, which contain STT3A or STT3B as catalytic subunit, respectively. OST-A and OST-B contain common core subunits RPN1, RPN2, OST48, OST4, DAD1 and TMEM258, and OST-A contains DC2/OSTC and KRTCAP2/KCP2 specific accessory subunits. OST-A complex assembly occurs through the formation of 3 subcomplexes. Subcomplex 1 contains RPN1 and TMEM258, subcomplex 2 contains the OST-A-specific subunits STT3A, DC2/OSTC, and KCP2 as well as the core subunit OST4, and subcomplex 3 contains RPN2, DAD1, and OST48. The OST-A complex can form stable complexes with the Sec61 complex or with both the Sec61 and TRAP complexes. Requires Mg(2+) as cofactor. The cofactor is Mn(2+). Expressed at high levels in placenta, liver, muscle and pancreas, and at very low levels in brain, lung and kidney. Expressed in skin fibroblasts (at protein level).

Its subcellular location is the endoplasmic reticulum. It is found in the endoplasmic reticulum membrane. It carries out the reaction a di-trans,poly-cis-dolichyl diphosphooligosaccharide + L-asparaginyl-[protein] = N(4)-(oligosaccharide-(1-&gt;4)-N-acetyl-beta-D-glucosaminyl-(1-&gt;4)-N-acetyl-beta-D-glucosaminyl)-L-asparaginyl-[protein] + a di-trans,poly-cis-dolichyl diphosphate + H(+). It functions in the pathway protein modification; protein glycosylation. Its activity is regulated as follows. STT3A, but not STT3B, is specifically inhibited by the N-glycosylation inhibitor NGI-235, which prevents productive binding pose of the glycan donor in the active site of STT3A. Its function is as follows. Catalytic subunit of the oligosaccharyl transferase (OST) complex that catalyzes the initial transfer of a defined glycan (Glc(3)Man(9)GlcNAc(2) in eukaryotes) from the lipid carrier dolichol-pyrophosphate to an asparagine residue within an Asn-X-Ser/Thr consensus motif in nascent polypeptide chains, the first step in protein N-glycosylation. N-glycosylation occurs cotranslationally and the complex associates with the Sec61 complex at the channel-forming translocon complex that mediates protein translocation across the endoplasmic reticulum (ER). All subunits are required for a maximal enzyme activity. This subunit contains the active site and the acceptor peptide and donor lipid-linked oligosaccharide (LLO) binding pockets. STT3A is present in the majority of OST complexes and mediates cotranslational N-glycosylation of most sites on target proteins, while STT3B-containing complexes are required for efficient post-translational glycosylation and mediate glycosylation of sites that have been skipped by STT3A. STT3A-containing OST-A complex is also required to prevent hyperglycosylation of some target proteins by preventing glycosylation of facultative sites before folding of target proteins is completed. In Homo sapiens (Human), this protein is Dolichyl-diphosphooligosaccharide--protein glycosyltransferase subunit STT3A.